The primary structure comprises 302 residues: Large ribosomal subunit protein bL28m (302 aa).

The protein belongs to the bacterial ribosomal protein bL28 family. Component of the mitochondrial ribosome large subunit (39S) which comprises a 16S rRNA and about 50 distinct proteins.

It is found in the mitochondrion. The sequence is that of Large ribosomal subunit protein bL28m (mRpL28) from Drosophila melanogaster (Fruit fly).